A 162-amino-acid polypeptide reads, in one-letter code: Cadmium metallothionein (162 aa).

The propeptide occupies 1-2 (MD).

In terms of biological role, the metallothioneins are involved in the cellular sequestration of toxic metal ions. This is Cadmium metallothionein (MTT1) from Tetrahymena thermophila.